The sequence spans 386 residues: MQDYKLPAGLRDNFGPQATQKESVRHYLTGLFQRHHYTLIETSLLEYRDVFGPYELQAESLYRILEADGQDLVLRPDLTLPIARFLVTTNVSLPTSFAYVGEQFRRNRQLTGLYNQSTQAGIELVGFQSRRAELECLTVISELNRDLFNGRLLVELGQARLADLVLADLPANERQKEAIKAALFNKNVPDYEAAIAPFKRERHYPFLAEWTWLFGKADVVEKMVAPLWVNPAAREAMQEVLDLAKLVAQLGDQELLVDFSTAAPQAYYTGVTFKAYADQTSTYLVSGGRYDNLLANFQEKSEPAIGLGIDVTLIAQLLERSAPRDQAKPTLVFCQLADWPTFAKRYGGDPAYEACLADSLVAARTQAAATGQQLKVMNEEGDLIDA.

Belongs to the class-II aminoacyl-tRNA synthetase family. HisZ subfamily. As to quaternary structure, heteromultimer composed of HisG and HisZ subunits.

It is found in the cytoplasm. The protein operates within amino-acid biosynthesis; L-histidine biosynthesis; L-histidine from 5-phospho-alpha-D-ribose 1-diphosphate: step 1/9. Required for the first step of histidine biosynthesis. May allow the feedback regulation of ATP phosphoribosyltransferase activity by histidine. The polypeptide is ATP phosphoribosyltransferase regulatory subunit (Limosilactobacillus fermentum (strain NBRC 3956 / LMG 18251) (Lactobacillus fermentum)).